The chain runs to 233 residues: MKSLLGTKVGMTQVFTETGKAVAATVIYVEPNKVLAVKTNEKDGYNAIQIGYETVKEKALNKPLLGQFKKANSDPKRHIKEFRDVVAEVGAELTVSEFEPGQLVNAQAYTKGHGFTGSIKRHNFSMGPMGHGAGYPHRYVGSIAKGRGGSQAQRVFKGTKLPGHYGHELVTTKNLLVLDVKANENLILIKGAIPGPKGSIVLLKSAKKVGHIVSDPQVVNYLANKASSSEANK.

Belongs to the universal ribosomal protein uL3 family. In terms of assembly, part of the 50S ribosomal subunit. Forms a cluster with proteins L14 and L19.

In terms of biological role, one of the primary rRNA binding proteins, it binds directly near the 3'-end of the 23S rRNA, where it nucleates assembly of the 50S subunit. In Ureaplasma urealyticum serovar 10 (strain ATCC 33699 / Western), this protein is Large ribosomal subunit protein uL3.